Consider the following 603-residue polypeptide: Elongation factor 4 (603 aa).

Positions 7–189 (SRLRNFCIIA…AVVDRIPSPK (183 aa)) constitute a tr-type G domain. Residues 19-24 (DHGKST) and 136-139 (NKVD) each bind GTP.

This sequence belongs to the TRAFAC class translation factor GTPase superfamily. Classic translation factor GTPase family. LepA subfamily.

It is found in the cell inner membrane. The catalysed reaction is GTP + H2O = GDP + phosphate + H(+). Required for accurate and efficient protein synthesis under certain stress conditions. May act as a fidelity factor of the translation reaction, by catalyzing a one-codon backward translocation of tRNAs on improperly translocated ribosomes. Back-translocation proceeds from a post-translocation (POST) complex to a pre-translocation (PRE) complex, thus giving elongation factor G a second chance to translocate the tRNAs correctly. Binds to ribosomes in a GTP-dependent manner. This is Elongation factor 4 from Prochlorococcus marinus (strain NATL2A).